We begin with the raw amino-acid sequence, 535 residues long: MTDQTTRLPIRRALISVSDKTGILEFARELQQLGVEILSTGGTYKLLKDNGVNAVEVADYTGFAEMMDGRVKTLHPKIHGGILGRRGTDDAIMNEHGIKPIDLVAVNLYPFEATISKPGCDLPTAIENIDIGGPTMVRSAAKNHKDVAIVVNASDYAGVVEGLKAGGLTYAQRFDLMLKAFEHTAAYDGMIANYMGTIDQSKESLSTEDRSEFPRTFNSQFVKAQEMRYGENPHQSAAFYVEAKKGEASISTAIQLQGKELSFNNVADTDAALECVKSFVKPACVIVKHANPCGVAVVPEDEGGIRKAYDLAYATDTESAFGGIIAFNRELDGETAKAIVERQFVEVIIAPKISQAAREVVAAKQNVRLLECGEWPAERAAGWDFKRVNGGLLVQSRDIGMITADDLKIVTKRAPTEQEIHDLVFAWKVAKFVKSNAIVYAKNRQTIGVGAGQMSRVNSARIAAIKAEHAGLQVQGAVMASDAFFPFRDGIDNAAKVGISAVIQPGGSMRDAEVIAAADEAGIAMVFTGMRHFRH.

The MGS-like domain maps to 6-151 (TRLPIRRALI…KNHKDVAIVV (146 aa)).

It belongs to the PurH family.

The catalysed reaction is (6R)-10-formyltetrahydrofolate + 5-amino-1-(5-phospho-beta-D-ribosyl)imidazole-4-carboxamide = 5-formamido-1-(5-phospho-D-ribosyl)imidazole-4-carboxamide + (6S)-5,6,7,8-tetrahydrofolate. It catalyses the reaction IMP + H2O = 5-formamido-1-(5-phospho-D-ribosyl)imidazole-4-carboxamide. It participates in purine metabolism; IMP biosynthesis via de novo pathway; 5-formamido-1-(5-phospho-D-ribosyl)imidazole-4-carboxamide from 5-amino-1-(5-phospho-D-ribosyl)imidazole-4-carboxamide (10-formyl THF route): step 1/1. Its pathway is purine metabolism; IMP biosynthesis via de novo pathway; IMP from 5-formamido-1-(5-phospho-D-ribosyl)imidazole-4-carboxamide: step 1/1. The polypeptide is Bifunctional purine biosynthesis protein PurH (Pseudomonas entomophila (strain L48)).